The primary structure comprises 148 residues: Gas vesicle protein J (148 aa).

Disordered regions lie at residues 1–21 (MTTTPIHPTRPQTNSNRVIPT) and 118–148 (EETTLTANNPEDLQPMYEVNSQEGDNSQLEA). Positions 136–148 (VNSQEGDNSQLEA) are enriched in polar residues.

It belongs to the gas vesicle GvpA family. As to quaternary structure, interacts with GvpA.

It is found in the gas vesicle. Its function is as follows. A minor component of the gas vesicle, might be involved in nucleating gas vesicle formation. Gas vesicles (GV) are hollow, gas filled proteinaceous nanostructures. During planktonic growth they allow positioning of the organism at a favorable depth for light or nutrient acquisition. Functionally, cluster expression in E.coli (gvpA1-gvpA2-gvpC-gvpN-gvpJ-gvpK-gvpF-gvpG-gvpV-gvpW) allows cells to float and produces irregularly shaped gas vesicles. The protein is Gas vesicle protein J of Nostoc sp. (strain PCC 7120 / SAG 25.82 / UTEX 2576).